Here is a 639-residue protein sequence, read N- to C-terminus: 3D-(3,5/4)-trihydroxycyclohexane-1,2-dione hydrolase (639 aa).

Glutamate 65 provides a ligand contact to thiamine diphosphate. Residues 437–517 are thiamine pyrophosphate binding; it reads SLPGDLQRMW…INIILFDNSG (81 aa). Aspartate 488 and asparagine 515 together coordinate Mg(2+).

It belongs to the TPP enzyme family. The cofactor is Mg(2+). Thiamine diphosphate serves as cofactor.

It carries out the reaction 3D-3,5/4-trihydroxycyclohexane-1,2-dione + H2O = 5-deoxy-D-glucuronate + H(+). Its pathway is polyol metabolism; myo-inositol degradation into acetyl-CoA; acetyl-CoA from myo-inositol: step 3/7. Functionally, involved in the cleavage of the C1-C2 bond of 3D-(3,5/4)-trihydroxycyclohexane-1,2-dione (THcHDO) to yield 5-deoxy-glucuronate (5DG). This chain is 3D-(3,5/4)-trihydroxycyclohexane-1,2-dione hydrolase, found in Geobacillus thermodenitrificans (strain NG80-2).